The primary structure comprises 166 residues: 2-amino-4-hydroxy-6-hydroxymethyldihydropteridine pyrophosphokinase (166 aa).

Belongs to the HPPK family.

The catalysed reaction is 6-hydroxymethyl-7,8-dihydropterin + ATP = (7,8-dihydropterin-6-yl)methyl diphosphate + AMP + H(+). Its pathway is cofactor biosynthesis; tetrahydrofolate biosynthesis; 2-amino-4-hydroxy-6-hydroxymethyl-7,8-dihydropteridine diphosphate from 7,8-dihydroneopterin triphosphate: step 4/4. Functionally, catalyzes the transfer of pyrophosphate from adenosine triphosphate (ATP) to 6-hydroxymethyl-7,8-dihydropterin, an enzymatic step in folate biosynthesis pathway. In Streptococcus pyogenes serotype M18 (strain MGAS8232), this protein is 2-amino-4-hydroxy-6-hydroxymethyldihydropteridine pyrophosphokinase (folK).